Reading from the N-terminus, the 463-residue chain is NADH dehydrogenase [ubiquinone] iron-sulfur protein 2, mitochondrial (463 aa).

The transit peptide at 1–33 directs the protein to the mitochondrion; the sequence is MAALRALCRLRGAAAQVLRPGAGVRLPIQPSRG. Lys62 carries the N6-acetyllysine modification. Arg118 carries the post-translational modification Symmetric dimethylarginine. [4Fe-4S] cluster is bound by residues Cys326, Cys332, and Cys347.

Belongs to the complex I 49 kDa subunit family. In terms of assembly, core subunit of respiratory chain NADH dehydrogenase (Complex I) which is composed of 45 different subunits. Component of the iron-sulfur (IP) fragment of the enzyme. Interacts with NDUFAF3. Interacts with NDUFAF7. Interacts with CERS2. The cofactor is [4Fe-4S] cluster. In terms of processing, dimethylation at Arg-118 by NDUFAF7 takes place after NDUFS2 assembles into the complex I, leading to stabilize the early intermediate complex.

It localises to the mitochondrion inner membrane. It carries out the reaction a ubiquinone + NADH + 5 H(+)(in) = a ubiquinol + NAD(+) + 4 H(+)(out). In terms of biological role, core subunit of the mitochondrial membrane respiratory chain NADH dehydrogenase (Complex I) which catalyzes electron transfer from NADH through the respiratory chain, using ubiquinone as an electron acceptor. Essential for the catalytic activity and assembly of complex I. Redox-sensitive, critical component of the oxygen-sensing pathway in the pulmonary vasculature which plays a key role in acute pulmonary oxygen-sensing and hypoxic pulmonary vasoconstriction. Plays an important role in carotid body sensing of hypoxia. Essential for glia-like neural stem and progenitor cell proliferation, differentiation and subsequent oligodendrocyte or neuronal maturation. The protein is NADH dehydrogenase [ubiquinone] iron-sulfur protein 2, mitochondrial (NDUFS2) of Bos taurus (Bovine).